A 238-amino-acid chain; its full sequence is TATA-box-binding protein (238 aa).

The tract at residues 1 to 58 (MDLKLPPTNPTNPQQAKTFMKSIEEDEKNKAEDLDIIKKEDIDEPKQEDTTDGNGGGG) is disordered. Residues 27 to 49 (EKNKAEDLDIIKKEDIDEPKQED) show a composition bias toward basic and acidic residues. 2 tandem repeats follow at residues 65–141 (LQNI…ARII) and 155–232 (IQNI…YPVL).

Belongs to the TBP family. Belongs to the TFIID complex together with the TBP-associated factors (TAFs). Binds DNA as monomer.

Its subcellular location is the nucleus. Functionally, general transcription factor that functions at the core of the DNA-binding multiprotein factor TFIID. Binding of TFIID to the TATA box is the initial transcriptional step of the pre-initiation complex (PIC), playing a role in the activation of eukaryotic genes transcribed by RNA polymerase II. The chain is TATA-box-binding protein (TBP1) from Candida albicans (strain SC5314 / ATCC MYA-2876) (Yeast).